A 182-amino-acid polypeptide reads, in one-letter code: NADH-quinone oxidoreductase subunit B 2 (182 aa).

The [4Fe-4S] cluster site is built by Cys-55, Cys-56, Cys-120, and Cys-150.

It belongs to the complex I 20 kDa subunit family. In terms of assembly, NDH-1 is composed of 14 different subunits. Subunits NuoB, C, D, E, F, and G constitute the peripheral sector of the complex. The cofactor is [4Fe-4S] cluster.

Its subcellular location is the cell inner membrane. The enzyme catalyses a quinone + NADH + 5 H(+)(in) = a quinol + NAD(+) + 4 H(+)(out). Its function is as follows. NDH-1 shuttles electrons from NADH, via FMN and iron-sulfur (Fe-S) centers, to quinones in the respiratory chain. The immediate electron acceptor for the enzyme in this species is believed to be ubiquinone. Couples the redox reaction to proton translocation (for every two electrons transferred, four hydrogen ions are translocated across the cytoplasmic membrane), and thus conserves the redox energy in a proton gradient. The protein is NADH-quinone oxidoreductase subunit B 2 of Sorangium cellulosum (strain So ce56) (Polyangium cellulosum (strain So ce56)).